A 165-amino-acid chain; its full sequence is Urease accessory protein UreE (165 aa).

It belongs to the UreE family.

It is found in the cytoplasm. In terms of biological role, involved in urease metallocenter assembly. Binds nickel. Probably functions as a nickel donor during metallocenter assembly. This chain is Urease accessory protein UreE, found in Flavobacterium johnsoniae (strain ATCC 17061 / DSM 2064 / JCM 8514 / BCRC 14874 / CCUG 350202 / NBRC 14942 / NCIMB 11054 / UW101) (Cytophaga johnsonae).